Here is a 712-residue protein sequence, read N- to C-terminus: Ribosomal RNA large subunit methyltransferase K/L (712 aa).

A THUMP domain is found at 42-153; sequence QALRIVMWSR…KGRASLSIDL (112 aa).

It belongs to the methyltransferase superfamily. RlmKL family.

It is found in the cytoplasm. It catalyses the reaction guanosine(2445) in 23S rRNA + S-adenosyl-L-methionine = N(2)-methylguanosine(2445) in 23S rRNA + S-adenosyl-L-homocysteine + H(+). The catalysed reaction is guanosine(2069) in 23S rRNA + S-adenosyl-L-methionine = N(2)-methylguanosine(2069) in 23S rRNA + S-adenosyl-L-homocysteine + H(+). Specifically methylates the guanine in position 2445 (m2G2445) and the guanine in position 2069 (m7G2069) of 23S rRNA. This is Ribosomal RNA large subunit methyltransferase K/L from Stenotrophomonas maltophilia (strain R551-3).